Here is a 506-residue protein sequence, read N- to C-terminus: DEAD-box ATP-dependent RNA helicase CshA (506 aa).

The Q motif signature appears at 2 to 30 (QNFKELGISDNTVQSLESMGFKEPTPIQK). Residues 33–203 (IPYALQGIDI…QQFMKSPKII (171 aa)) enclose the Helicase ATP-binding domain. 46-53 (AQTGTGKT) is an ATP binding site. The short motif at 150–153 (DEAD) is the DEAD box element. The 162-residue stretch at 214-375 (QIEEFYTIVK…LRPPHRKEVL (162 aa)) folds into the Helicase C-terminal domain. The tract at residues 436 to 506 (EKPLSRKGRN…KGRTFADHQK (71 aa)) is disordered. Over residues 468 to 480 (KRSKGYSSKKKST) the composition is skewed to basic residues.

It belongs to the DEAD box helicase family. CshA subfamily. As to quaternary structure, oligomerizes, may be a member of the RNA degradosome.

The protein localises to the cytoplasm. It carries out the reaction ATP + H2O = ADP + phosphate + H(+). In terms of biological role, DEAD-box RNA helicase possibly involved in RNA degradation. Unwinds dsRNA in both 5'- and 3'-directions, has RNA-dependent ATPase activity. The protein is DEAD-box ATP-dependent RNA helicase CshA of Staphylococcus aureus (strain MRSA252).